The following is a 118-amino-acid chain: MTHWHITSWVVALILVFVSYGLYGSGKAKGAKITHMILRLFYIIIILTGAELFVRFANWNGEYAGKMLLGIITIGLMEMLVIRKKKGKSTGGLWIGFIIVLVLTVLLGLHLPIGFHVF.

Helical transmembrane passes span 4 to 24 (WHIT…GLYG), 33 to 53 (ITHM…AELF), 62 to 82 (EYAG…MLVI), and 93 to 113 (LWIG…HLPI).

The protein belongs to the UPF0344 family.

It is found in the cell membrane. The protein is UPF0344 protein RBAM_010920 of Bacillus velezensis (strain DSM 23117 / BGSC 10A6 / LMG 26770 / FZB42) (Bacillus amyloliquefaciens subsp. plantarum).